Here is a 450-residue protein sequence, read N- to C-terminus: UDP-N-acetylmuramoylalanine--D-glutamate ligase (450 aa).

Position 119-125 (119-125 (GSNGKTT)) interacts with ATP.

This sequence belongs to the MurCDEF family.

Its subcellular location is the cytoplasm. The enzyme catalyses UDP-N-acetyl-alpha-D-muramoyl-L-alanine + D-glutamate + ATP = UDP-N-acetyl-alpha-D-muramoyl-L-alanyl-D-glutamate + ADP + phosphate + H(+). It participates in cell wall biogenesis; peptidoglycan biosynthesis. Its function is as follows. Cell wall formation. Catalyzes the addition of glutamate to the nucleotide precursor UDP-N-acetylmuramoyl-L-alanine (UMA). This is UDP-N-acetylmuramoylalanine--D-glutamate ligase from Bacillus cereus (strain ATCC 10987 / NRS 248).